A 379-amino-acid chain; its full sequence is Cinnamyl alcohol dehydrogenase 7 (379 aa).

Positions 1–13 are enriched in low complexity; that stretch reads MAPTTTATAAAEQ. The segment at 1 to 21 is disordered; sequence MAPTTTATAAAEQAPPPQHTR. Residue C60 participates in Zn(2+) binding. An NADP(+)-binding site is contributed by S62. Zn(2+) contacts are provided by H82, E83, C113, C116, C119, C127, and C185. NADP(+)-binding positions include T189, 210–215, 233–238, T273, G297, and 320–322; these read GLGGLG, STSPVK, and SCM.

This sequence belongs to the zinc-containing alcohol dehydrogenase family. As to quaternary structure, homodimer. Requires Zn(2+) as cofactor. In terms of tissue distribution, expressed in roots, first internodes and panicles. Expressed in the vascular bundles and sclerenchyma cells below the epidermis in leaves and stems.

It carries out the reaction (E)-cinnamyl alcohol + NADP(+) = (E)-cinnamaldehyde + NADPH + H(+). The enzyme catalyses (E)-coniferol + NADP(+) = (E)-coniferaldehyde + NADPH + H(+). The catalysed reaction is (E)-sinapyl alcohol + NADP(+) = (E)-sinapaldehyde + NADPH + H(+). It catalyses the reaction (E)-4-coumaroyl alcohol + NADP(+) = (E)-4-coumaraldehyde + NADPH + H(+). It carries out the reaction (E)-caffeyl alcohol + NADP(+) = (E)-caffeyl aldehyde + NADPH + H(+). Its pathway is aromatic compound metabolism; phenylpropanoid biosynthesis. Its function is as follows. Involved in lignin biosynthesis. May catalyze the final step specific for the production of lignin monomers, like coniferyl alcohol, sinapyl alcohol and 4-coumaryl alcohol. The sequence is that of Cinnamyl alcohol dehydrogenase 7 from Oryza sativa subsp. japonica (Rice).